Here is a 98-residue protein sequence, read N- to C-terminus: Large ribosomal subunit protein uL23 (98 aa).

This sequence belongs to the universal ribosomal protein uL23 family. As to quaternary structure, part of the 50S ribosomal subunit. Contacts protein L29, and trigger factor when it is bound to the ribosome.

Its function is as follows. One of the early assembly proteins it binds 23S rRNA. One of the proteins that surrounds the polypeptide exit tunnel on the outside of the ribosome. Forms the main docking site for trigger factor binding to the ribosome. This Cellvibrio japonicus (strain Ueda107) (Pseudomonas fluorescens subsp. cellulosa) protein is Large ribosomal subunit protein uL23.